Consider the following 358-residue polypeptide: uncharacterized protein (358 aa).

The tract at residues 1–47 (MGNVAGETRANVIPLHTNRSRVAARRRAGQRAESRQHPSLLSDPNDR) is disordered. Residues 18-29 (NRSRVAARRRAG) are compositionally biased toward basic residues.

The protein to M.leprae ML2427.

This is an uncharacterized protein from Mycobacterium tuberculosis (strain CDC 1551 / Oshkosh).